The following is a 291-amino-acid chain: Small ribosomal subunit biogenesis GTPase RsgA (291 aa).

In terms of domain architecture, CP-type G spans 63-221 (QNELKRPPVS…VADTPGFSAL (159 aa)). GTP is bound by residues 112-115 (TKKD) and 164-172 (GQSGVGKST). The Zn(2+) site is built by C245, C250, H252, and C258.

This sequence belongs to the TRAFAC class YlqF/YawG GTPase family. RsgA subfamily. In terms of assembly, monomer. Associates with 30S ribosomal subunit, binds 16S rRNA. Requires Zn(2+) as cofactor.

The protein localises to the cytoplasm. Functionally, one of several proteins that assist in the late maturation steps of the functional core of the 30S ribosomal subunit. Helps release RbfA from mature subunits. May play a role in the assembly of ribosomal proteins into the subunit. Circularly permuted GTPase that catalyzes slow GTP hydrolysis, GTPase activity is stimulated by the 30S ribosomal subunit. In Staphylococcus carnosus (strain TM300), this protein is Small ribosomal subunit biogenesis GTPase RsgA.